Here is a 237-residue protein sequence, read N- to C-terminus: tRNA (guanine-N(7)-)-methyltransferase (237 aa).

The S-adenosyl-L-methionine site is built by Glu-56, Glu-81, Asp-108, and Asp-131. Residue Asp-131 is part of the active site. Substrate contacts are provided by residues Lys-135, Asp-167, and 204–207 (TKFE).

It belongs to the class I-like SAM-binding methyltransferase superfamily. TrmB family.

It carries out the reaction guanosine(46) in tRNA + S-adenosyl-L-methionine = N(7)-methylguanosine(46) in tRNA + S-adenosyl-L-homocysteine. Its pathway is tRNA modification; N(7)-methylguanine-tRNA biosynthesis. In terms of biological role, catalyzes the formation of N(7)-methylguanine at position 46 (m7G46) in tRNA. The protein is tRNA (guanine-N(7)-)-methyltransferase of Legionella pneumophila (strain Paris).